A 140-amino-acid chain; its full sequence is Nucleoside diphosphate kinase (140 aa).

Residues Lys-11, Phe-59, Arg-87, Thr-93, Arg-104, and Asn-114 each coordinate ATP. The active-site Pros-phosphohistidine intermediate is the His-117.

This sequence belongs to the NDK family. As to quaternary structure, homotetramer. Mg(2+) is required as a cofactor.

It localises to the cytoplasm. The enzyme catalyses a 2'-deoxyribonucleoside 5'-diphosphate + ATP = a 2'-deoxyribonucleoside 5'-triphosphate + ADP. The catalysed reaction is a ribonucleoside 5'-diphosphate + ATP = a ribonucleoside 5'-triphosphate + ADP. Functionally, major role in the synthesis of nucleoside triphosphates other than ATP. The ATP gamma phosphate is transferred to the NDP beta phosphate via a ping-pong mechanism, using a phosphorylated active-site intermediate. This Rhodospirillum centenum (strain ATCC 51521 / SW) protein is Nucleoside diphosphate kinase.